The sequence spans 425 residues: Proteinase-activated receptor 1 (425 aa).

The N-terminal stretch at 1–21 is a signal peptide; that stretch reads MGPRRLLLVAACLCLCGPLLS. Residues 22–41 constitute a propeptide, removed for receptor activation; the sequence is ARTRARRPASKATNATLDPR. 3 N-linked (GlcNAc...) asparagine glycosylation sites follow: N35, N62, and N75. The Extracellular portion of the chain corresponds to 42 to 102; sequence SFLLRNPNDK…SGYLTSSWLT (61 aa). A helical transmembrane segment spans residues 103–128; the sequence is LFVPSVYTGVFVVSLPVNIMAIVVFI. Residues 129–137 are Cytoplasmic-facing; sequence LKMKVKKPA. The helical transmembrane segment at 138-157 threads the bilayer; the sequence is VVYMLHLATADVLFVSVLPF. Residues 158–176 lie on the Extracellular side of the membrane; sequence KISYYLSGSDWQFGSELCR. The cysteines at positions 175 and 254 are disulfide-linked. A helical membrane pass occupies residues 177-198; that stretch reads FVTAAFYCNMYASILLMTVISI. The Cytoplasmic segment spans residues 199–218; sequence DRFLAVVYPMQSLSWRTLGR. The chain crosses the membrane as a helical span at residues 219-239; the sequence is ASFTCLAIWALAIAGVVPLLL. Residues 240-268 lie on the Extracellular side of the membrane; that stretch reads KEQTIQVPGLNITTCHDVLNETLLEGYYA. N-linked (GlcNAc...) asparagine glycans are attached at residues N250 and N259. The helical transmembrane segment at 269 to 288 threads the bilayer; the sequence is YYFSAFSAVFFFVPLIISTV. The Cytoplasmic portion of the chain corresponds to 289 to 311; the sequence is CYVSIIRCLSSSTVANRSKKSRA. The helical transmembrane segment at 312-334 threads the bilayer; sequence LFLSAAVFCIFIICFGPTNILLI. Residues 335–350 lie on the Extracellular side of the membrane; it reads AHYSFLSHTSTTEAAY. The chain crosses the membrane as a helical span at residues 351 to 374; the sequence is FAYLLCVCVSSISCCIDPLIYYYA. The Cytoplasmic portion of the chain corresponds to 375–425; sequence SSECQRYVYSILCCKESSDPSSSNSSGQLMASKMDTCSSNLNNSIYKKLLT. S418 is modified (phosphoserine).

It belongs to the G-protein coupled receptor 1 family. Post-translationally, proteolytic cleavage by thrombin generates a new N-terminus that functions as a tethered ligand. Also proteolytically cleaved by cathepsin CTSG. Cleavage at 41-Arg-|-Ser-42 by CTSG results in receptor activation while cleavage at 55-Phe-|-Trp-56 results in inhibition of receptor activation. Phosphorylated in the C-terminal tail; probably mediating desensitization prior to the uncoupling and internalization of the receptor.

Its subcellular location is the cell membrane. In terms of biological role, high affinity receptor that binds the activated thrombin, leading to calcium release from intracellular stores. The thrombin-activated receptor signaling pathway is mediated through PTX-insensitive G proteins, activation of phospholipase C resulting in the production of 1D-myo-inositol 1,4,5-trisphosphate (InsP3) which binds to InsP3 receptors causing calcium release from the stores. In astrocytes, the calcium released into the cytosol allows the Ca(2+)-dependent release of L-glutamate into the synaptic cleft through BEST1, that targets the neuronal postsynaptic GRIN2A/NMDAR receptor resulting in the synaptic plasticity regulation. May play a role in platelets activation and in vascular development. Mediates up-regulation of pro-inflammatory cytokines, such as MCP-1/CCL2 and IL6, triggered by coagulation factor Xa (F10) in cardiac fibroblasts and umbilical vein endothelial cells. This chain is Proteinase-activated receptor 1, found in Papio hamadryas (Hamadryas baboon).